A 322-amino-acid chain; its full sequence is Anthranilate phosphoribosyltransferase (322 aa).

Residues Gly-71, 74 to 75, Thr-79, 81 to 84, 99 to 107, and Ala-111 contribute to the 5-phospho-alpha-D-ribose 1-diphosphate site; these read GD, NVST, and KFGNRSASG. Residue Gly-71 participates in anthranilate binding. A Mg(2+)-binding site is contributed by Ser-83. Asn-102 lines the anthranilate pocket. Arg-157 is an anthranilate binding site. Positions 215 and 216 each coordinate Mg(2+).

This sequence belongs to the anthranilate phosphoribosyltransferase family. In terms of assembly, homodimer. It depends on Mg(2+) as a cofactor.

It catalyses the reaction N-(5-phospho-beta-D-ribosyl)anthranilate + diphosphate = 5-phospho-alpha-D-ribose 1-diphosphate + anthranilate. It functions in the pathway amino-acid biosynthesis; L-tryptophan biosynthesis; L-tryptophan from chorismate: step 2/5. Its function is as follows. Catalyzes the transfer of the phosphoribosyl group of 5-phosphorylribose-1-pyrophosphate (PRPP) to anthranilate to yield N-(5'-phosphoribosyl)-anthranilate (PRA). The polypeptide is Anthranilate phosphoribosyltransferase (Thermoplasma acidophilum (strain ATCC 25905 / DSM 1728 / JCM 9062 / NBRC 15155 / AMRC-C165)).